We begin with the raw amino-acid sequence, 373 residues long: MPPKQAQSKKTVEKEKKKKVEDKTFGLKNKNKSKKVAAYVSQVEAQVKHSGLQNKEAALKEKAKRDKELAEKAKKEAESILVNTIVQSKVPLGVDPKSIVCEYFKQGVTCPKGNRCKFAHDLAAGRKSEKIDIYTDRRKDEDTMENWDEAKLKSVVEKKRTTENKAKPTAIICKFFLDAIESKKYGWFWECPNGGEKCAYQHCLPEGYQLKKKKSREEDEVEEIPIEELIEEERAKLTKSTPVTLETFLRWKEEKRLQKEKAAKDAQDKRLADIKAGKTSMSGREMFVFNPDLFVDDESAIDTKSKEYEKSEEEIAALANQINTSLFTDGGVLPSDDDDDDDDDDDDDEDGDDEEEDDDEEEGEYEEEEASDE.

Positions 1–27 are disordered; that stretch reads MPPKQAQSKKTVEKEKKKKVEDKTFGL. Residues 10 to 25 are compositionally biased toward basic and acidic residues; sequence KTVEKEKKKKVEDKTF. C3H1-type zinc fingers lie at residues 95–123 and 167–205; these read DPKSIVCEYFKQGVTCPKGNRCKFAHDLA and KPTAIICKFFLDAIESKKYGWFWECPNGGEKCAYQHCLP. Residues 252–326 are a coiled coil; the sequence is KEEKRLQKEK…ALANQINTSL (75 aa). The interval 325–373 is disordered; that stretch reads SLFTDGGVLPSDDDDDDDDDDDDDEDGDDEEEDDDEEEGEYEEEEASDE. Positions 335 to 373 are enriched in acidic residues; that stretch reads SDDDDDDDDDDDDDEDGDDEEEDDDEEEGEYEEEEASDE.

The protein belongs to the ZC3H15/TMA46 family.

This Dictyostelium discoideum (Social amoeba) protein is Zinc finger CCCH domain-containing protein 15 homolog.